The following is a 272-amino-acid chain: Prohibitin 1 (272 aa).

An N-acetylalanine modification is found at alanine 2. Threonine 91 carries the phosphothreonine modification. N6-acetyllysine occurs at positions 128 and 186. The stretch at 177-211 forms a coiled coil; sequence KEFTEAVEAKQVAQQEAERARFVVEKAEQQKKAAI. Residue lysine 202 is modified to N6-acetyllysine; alternate. Lysine 202 carries the post-translational modification N6-succinyllysine; alternate. Tyrosine 249 is subject to Phosphotyrosine.

Belongs to the prohibitin family. Interacts with PHB2. Interacts with STOML2. Interacts with CD86 (via cytoplasmic domain); the interactions increases after priming with CD40. As to quaternary structure, (Microbial infection) Interacts with human enterovirus 71/EV-71 capsid protein VP0, protein 3CD and protease 3C. In terms of tissue distribution, widely expressed in different tissues.

The protein localises to the mitochondrion inner membrane. It is found in the nucleus. The protein resides in the cell membrane. Its subcellular location is the cytoplasm. With respect to regulation, target of the anti-cancer drug Rocaglamide (Roc-A). In terms of biological role, protein with pleiotropic attributes mediated in a cell-compartment- and tissue-specific manner, which include the plasma membrane-associated cell signaling functions, mitochondrial chaperone, and transcriptional co-regulator of transcription factors in the nucleus. Plays a role in adipose tissue and glucose homeostasis in a sex-specific manner. Contributes to pulmonary vascular remodeling by accelerating proliferation of pulmonary arterial smooth muscle cells. Functionally, in the mitochondria, together with PHB2, forms large ring complexes (prohibitin complexes) in the inner mitochondrial membrane (IMM) and functions as a chaperone protein that stabilizes mitochondrial respiratory enzymes and maintains mitochondrial integrity in the IMM, which is required for mitochondrial morphogenesis, neuronal survival, and normal lifespan. The prohibitin complex, with DNAJC19, regulates cardiolipin remodeling and the protein turnover of OMA1 in a cardiolipin-binding manner. Regulates mitochondrial respiration activity playing a role in cellular aging. The prohibitin complex plays a role of mitophagy receptor involved in targeting mitochondria for autophagic degradation. Involved in mitochondrial-mediated antiviral innate immunity, activates RIG-I-mediated signal transduction and production of IFNB1 and pro-inflammatory cytokine IL6. Its function is as follows. In the nucleus, acts as a transcription coregulator, enhances promoter binding by TP53, a transcription factor it activates, but reduces the promoter binding by E2F1, a transcription factor it represses. Interacts with STAT3 to affect IL17 secretion in T-helper Th17 cells. In the plasma membrane, cooperates with CD86 to mediate CD86-signaling in B lymphocytes that regulates the level of IgG1 produced through the activation of distal signaling intermediates. Upon CD40 engagement, required to activate NF-kappa-B signaling pathway via phospholipase C and protein kinase C activation. In terms of biological role, (Microbial infection) In neuronal cells, cell surface-expressed PHB1 is involved in human enterovirus 71/EV-71 entry into neuronal cells specifically, while membrane-bound mitochondrial PHB1 associates with the virus replication complex and facilitates viral replication. May serve as a receptor for EV71. In Mus musculus (Mouse), this protein is Prohibitin 1 (Phb1).